A 331-amino-acid chain; its full sequence is L-lactate dehydrogenase A chain (331 aa).

NAD(+) is bound by residues 29–57 (GMVG…MEDK) and R98. Substrate is bound by residues R105, N137, and R168. NAD(+) is bound at residue N137. H192 functions as the Proton acceptor in the catalytic mechanism. T247 contacts substrate.

It belongs to the LDH/MDH superfamily. LDH family. As to quaternary structure, homotetramer.

It is found in the cytoplasm. It carries out the reaction (S)-lactate + NAD(+) = pyruvate + NADH + H(+). It functions in the pathway fermentation; pyruvate fermentation to lactate; (S)-lactate from pyruvate: step 1/1. Functionally, interconverts simultaneously and stereospecifically pyruvate and lactate with concomitant interconversion of NADH and NAD(+). This chain is L-lactate dehydrogenase A chain (ldha), found in Paranotothenia magellanica (Maori cod).